A 209-amino-acid chain; its full sequence is ATP phosphoribosyltransferase (209 aa).

Belongs to the ATP phosphoribosyltransferase family. Short subfamily. Heteromultimer composed of HisG and HisZ subunits.

It is found in the cytoplasm. The enzyme catalyses 1-(5-phospho-beta-D-ribosyl)-ATP + diphosphate = 5-phospho-alpha-D-ribose 1-diphosphate + ATP. Its pathway is amino-acid biosynthesis; L-histidine biosynthesis; L-histidine from 5-phospho-alpha-D-ribose 1-diphosphate: step 1/9. Catalyzes the condensation of ATP and 5-phosphoribose 1-diphosphate to form N'-(5'-phosphoribosyl)-ATP (PR-ATP). Has a crucial role in the pathway because the rate of histidine biosynthesis seems to be controlled primarily by regulation of HisG enzymatic activity. In Caldicellulosiruptor saccharolyticus (strain ATCC 43494 / DSM 8903 / Tp8T 6331), this protein is ATP phosphoribosyltransferase.